The sequence spans 227 residues: Uridylate kinase (227 aa).

6-10 (KVSGK) contacts ATP. UMP is bound at residue G43. ATP is bound by residues G44 and R48. Residues D65 and 113-119 (FQPGQST) each bind UMP. 4 residues coordinate ATP: T139, N140, Y145, and D148.

This sequence belongs to the UMP kinase family. As to quaternary structure, homohexamer.

Its subcellular location is the cytoplasm. The catalysed reaction is UMP + ATP = UDP + ADP. Its pathway is pyrimidine metabolism; CTP biosynthesis via de novo pathway; UDP from UMP (UMPK route): step 1/1. With respect to regulation, inhibited by UTP. In terms of biological role, catalyzes the reversible phosphorylation of UMP to UDP. This Sulfolobus acidocaldarius (strain ATCC 33909 / DSM 639 / JCM 8929 / NBRC 15157 / NCIMB 11770) protein is Uridylate kinase.